The chain runs to 459 residues: O-phospho-L-seryl-tRNA:Cys-tRNA synthase 1 (459 aa).

Residues 152–153, Asn257, and 280–282 contribute to the pyridoxal 5'-phosphate site; these read AR and SGH. Lys283 carries the N6-(pyridoxal phosphate)lysine modification.

It belongs to the SepCysS family. As to quaternary structure, homodimer. Interacts with SepRS. The cofactor is pyridoxal 5'-phosphate.

The enzyme catalyses O-phospho-L-seryl-tRNA(Cys) + hydrogen sulfide + H(+) = L-cysteinyl-tRNA(Cys) + phosphate. Functionally, converts O-phospho-L-seryl-tRNA(Cys) (Sep-tRNA(Cys)) to L-cysteinyl-tRNA(Cys) (Cys-tRNA(Cys)). This chain is O-phospho-L-seryl-tRNA:Cys-tRNA synthase 1, found in Methanococcoides burtonii (strain DSM 6242 / NBRC 107633 / OCM 468 / ACE-M).